The chain runs to 518 residues: MESTLSVSDEKLTNSSTALNNCGDNKESSQVLTTANTTTDNQQVQPKSQHQQSASTEPLSKERTNISLENDLILVDPNQQSKNTVSDSVQDTTGVPSDHGKQQTIGDQIKILISSNPLNIEEYSSHLNRLATILYEENFTSDFLVTLHYKILQLMDELPKFVDLQNPLKSQLYTIIDKNFDILIKLATNYKVMEVSTASIRFLTTVFMNLNYWEVYNLLNKKPVLYHFLNLIEFDLNDCYTRFINDYQRFTYDKITQPTVKSRSRSKVTKKRKVKGDSDFAGSNTATATTSVTTPDANTSHEGKQHRSEAFFSLNPDTSDHDKYVADVISGANVQKRKFRPDVKLEHHRIIKKPQPAADKLSTKSSNYDPDVIHECQLPSAEEPHKLCLRRFSRKYELIRHQETVHSKKKKLFKCFVCVKQNPGVGPRIFTRHDTLAKHIRVNHKISGKEAKAEVAYSKKHAEVVEEGDITVHVGRRKTKVDFELRAHMEKRKSSGDDTNYMETSDLESGEEEVTFNK.

The span at 1 to 41 (MESTLSVSDEKLTNSSTALNNCGDNKESSQVLTTANTTTDN) shows a compositional bias: polar residues. Disordered regions lie at residues 1 to 63 (MEST…SKER), 75 to 101 (VDPNQQSKNTVSDSVQDTTGVPSDHGK), and 261 to 307 (KSRS…KQHR). A compositionally biased stretch (low complexity) spans 42 to 52 (QQVQPKSQHQQ). Over residues 77–95 (PNQQSKNTVSDSVQDTTGV) the composition is skewed to polar residues. Residues 262-274 (SRSRSKVTKKRKV) show a composition bias toward basic residues. A compositionally biased stretch (low complexity) spans 283–298 (SNTATATTSVTTPDAN). The C2H2-type zinc finger occupies 374–406 (HECQLPSAEEPHKLCLRRFSRKYELIRHQETVH). A disordered region spans residues 492–518 (RKSSGDDTNYMETSDLESGEEEVTFNK). A compositionally biased stretch (acidic residues) spans 505-518 (SDLESGEEEVTFNK).

Its subcellular location is the nucleus. Its function is as follows. Probable transcription factor involved in the regulation of filamentous growth. This is Filamentous growth regulator 15 (FGR15) from Candida albicans (strain SC5314 / ATCC MYA-2876) (Yeast).